Reading from the N-terminus, the 360-residue chain is UDP-N-acetylglucosamine--N-acetylmuramyl-(pentapeptide) pyrophosphoryl-undecaprenol N-acetylglucosamine transferase (360 aa).

Residues 15–17, Asn-128, Arg-164, Ser-192, Ile-247, and Gln-292 contribute to the UDP-N-acetyl-alpha-D-glucosamine site; that span reads TGG.

This sequence belongs to the glycosyltransferase 28 family. MurG subfamily.

The protein localises to the cell inner membrane. It catalyses the reaction di-trans,octa-cis-undecaprenyl diphospho-N-acetyl-alpha-D-muramoyl-L-alanyl-D-glutamyl-meso-2,6-diaminopimeloyl-D-alanyl-D-alanine + UDP-N-acetyl-alpha-D-glucosamine = di-trans,octa-cis-undecaprenyl diphospho-[N-acetyl-alpha-D-glucosaminyl-(1-&gt;4)]-N-acetyl-alpha-D-muramoyl-L-alanyl-D-glutamyl-meso-2,6-diaminopimeloyl-D-alanyl-D-alanine + UDP + H(+). It functions in the pathway cell wall biogenesis; peptidoglycan biosynthesis. Cell wall formation. Catalyzes the transfer of a GlcNAc subunit on undecaprenyl-pyrophosphoryl-MurNAc-pentapeptide (lipid intermediate I) to form undecaprenyl-pyrophosphoryl-MurNAc-(pentapeptide)GlcNAc (lipid intermediate II). The sequence is that of UDP-N-acetylglucosamine--N-acetylmuramyl-(pentapeptide) pyrophosphoryl-undecaprenol N-acetylglucosamine transferase from Blochmanniella floridana.